Reading from the N-terminus, the 633-residue chain is Ankyrin repeat and SOCS box protein 2 (633 aa).

Residues 26–45 (SEDELVQMAIEQSLADKTRG) form the UIM domain. ANK repeat units follow at residues 102–131 (APVDPVLKAIKEDDEEALTAMIKAGKNLSE), 135–165 (EGWLPLHEAAYYGQLNCLKALHRAYPAVIDQ), 169–198 (QEETALYLATCRGHVDCLQFLLQAGAEPDI), 202–231 (SRETPLYKACERKNVEAVRILVQYKADTNH), 235–264 (RGWTALHESVARNDLEVMEILVSGGAKVEA), 268–297 (YGITPLFVAAQSGQLEALRFLAKYGADINT), 301–330 (DSASALYEACKNGHEEVVEFLLSQGADANK), 334–363 (DGMLPLHIASKKGNYRIVQMLLPVTSRTRV), 366–395 (SGISPLHLAAERNNDEVLEALLGARFDVNA), 408–437 (RRSSALYFAVVNNNVYATELLLLAGADPNR), 438–467 (DVINPLLVAIRHGCLRTMQLLLDHGANIDA), and 474–502 (TAFPATIMFAMKCLSLLKFLMDLGCNGEP). Phosphoserine is present on serine 369. The SOCS box domain maps to 579 to 633 (EDWAVIKEKAEPPRPLAHLCRLRVRKAIGKYRIKLLDTLPLPGRLIRYLKYENTQ).

It belongs to the ankyrin SOCS box (ASB) family. In terms of assembly, component of a probable ECS E3 ubiquitin-protein ligase complex which contains CUL5, either RBX1 or RNF7/RBX2, Elongin BC complex (ELOB and ELOC) and ASB2. Interacts with SKP2. Through its interaction with SKP2, likely to bridge the formation of dimeric E3-ubiquitin-protein ligase complexes composed of an ECS complex and an SCF(SKP2) complex. Interacts with JAK2; the interaction targets JAK2 for Notch-mediated proteasomal degradation. Interacts with TCF3/E2A; the interaction is mediated by SKP2 and targets TCF3 for Notch-mediated proteasomal degradation. Interacts with DES. Post-translationally, monoubiquitinated.

The protein localises to the cytoplasm. It localises to the cytoskeleton. It is found in the stress fiber. Its subcellular location is the myofibril. The protein resides in the sarcomere. The protein localises to the z line. It functions in the pathway protein modification; protein ubiquitination. Substrate-recognition component of a SCF-like ECS (Elongin-Cullin-SOCS-box protein) E3 ubiquitin-protein ligase complex which mediates the ubiquitination and subsequent proteasomal degradation of target proteins. Mediates Notch-induced ubiquitination and degradation of substrates including E2A and JAK2. Required during embryonic heart development for complete heart looping. Required for cardiomyocyte differentiation. Involved in myogenic differentiation and targets filamin FLNB for proteasomal degradation but not filamin FLNA. Also targets DES for proteasomal degradation. Acts as a negative regulator of skeletal muscle mass. The protein is Ankyrin repeat and SOCS box protein 2 of Bos taurus (Bovine).